The following is a 689-amino-acid chain: Glycine--tRNA ligase beta subunit (689 aa).

It belongs to the class-II aminoacyl-tRNA synthetase family. In terms of assembly, tetramer of two alpha and two beta subunits.

It localises to the cytoplasm. The enzyme catalyses tRNA(Gly) + glycine + ATP = glycyl-tRNA(Gly) + AMP + diphosphate. The protein is Glycine--tRNA ligase beta subunit of Escherichia coli O17:K52:H18 (strain UMN026 / ExPEC).